A 319-amino-acid chain; its full sequence is Ribonuclease Z (319 aa).

Residues histidine 62, histidine 64, aspartate 66, histidine 67, histidine 145, aspartate 216, and histidine 274 each coordinate Zn(2+). Aspartate 66 functions as the Proton acceptor in the catalytic mechanism.

The protein belongs to the RNase Z family. Homodimer. Requires Zn(2+) as cofactor.

The catalysed reaction is Endonucleolytic cleavage of RNA, removing extra 3' nucleotides from tRNA precursor, generating 3' termini of tRNAs. A 3'-hydroxy group is left at the tRNA terminus and a 5'-phosphoryl group is left at the trailer molecule.. Zinc phosphodiesterase, which displays some tRNA 3'-processing endonuclease activity. Probably involved in tRNA maturation, by removing a 3'-trailer from precursor tRNA. In Synechococcus sp. (strain CC9605), this protein is Ribonuclease Z.